A 245-amino-acid chain; its full sequence is tRNA pseudouridine synthase A (245 aa).

The Nucleophile role is filled by Asp-52. Position 111 (Tyr-111) interacts with substrate.

The protein belongs to the tRNA pseudouridine synthase TruA family. As to quaternary structure, homodimer.

It carries out the reaction uridine(38/39/40) in tRNA = pseudouridine(38/39/40) in tRNA. Formation of pseudouridine at positions 38, 39 and 40 in the anticodon stem and loop of transfer RNAs. This chain is tRNA pseudouridine synthase A, found in Thermotoga maritima (strain ATCC 43589 / DSM 3109 / JCM 10099 / NBRC 100826 / MSB8).